The sequence spans 317 residues: Lipoyl synthase (317 aa).

The segment at 1–22 is disordered; sequence MVTVVNTLNRPRHPEKQNRPET. The span at 12-22 shows a compositional bias: basic and acidic residues; the sequence is RHPEKQNRPET. Residues cysteine 57, cysteine 62, cysteine 68, cysteine 83, cysteine 87, cysteine 90, and serine 296 each coordinate [4Fe-4S] cluster. One can recognise a Radical SAM core domain in the interval 69–285; it reads WEKKHATFMI…ETVAYAKGFL (217 aa).

The protein belongs to the radical SAM superfamily. Lipoyl synthase family. [4Fe-4S] cluster is required as a cofactor.

The protein localises to the cytoplasm. It carries out the reaction [[Fe-S] cluster scaffold protein carrying a second [4Fe-4S](2+) cluster] + N(6)-octanoyl-L-lysyl-[protein] + 2 oxidized [2Fe-2S]-[ferredoxin] + 2 S-adenosyl-L-methionine + 4 H(+) = [[Fe-S] cluster scaffold protein] + N(6)-[(R)-dihydrolipoyl]-L-lysyl-[protein] + 4 Fe(3+) + 2 hydrogen sulfide + 2 5'-deoxyadenosine + 2 L-methionine + 2 reduced [2Fe-2S]-[ferredoxin]. Its pathway is protein modification; protein lipoylation via endogenous pathway; protein N(6)-(lipoyl)lysine from octanoyl-[acyl-carrier-protein]: step 2/2. In terms of biological role, catalyzes the radical-mediated insertion of two sulfur atoms into the C-6 and C-8 positions of the octanoyl moiety bound to the lipoyl domains of lipoate-dependent enzymes, thereby converting the octanoylated domains into lipoylated derivatives. In Azorhizobium caulinodans (strain ATCC 43989 / DSM 5975 / JCM 20966 / LMG 6465 / NBRC 14845 / NCIMB 13405 / ORS 571), this protein is Lipoyl synthase.